The sequence spans 54 residues: Large ribosomal subunit protein bL33A (54 aa).

This sequence belongs to the bacterial ribosomal protein bL33 family.

In Myxococcus xanthus (strain DK1622), this protein is Large ribosomal subunit protein bL33A.